Consider the following 1252-residue polypeptide: Guanine nucleotide exchange factor SDC25 (1252 aa).

An SH3 domain is found at 26 to 97; sequence QPIDVVECTY…PPSFTRSILN (72 aa). Disordered regions lie at residues 409–454 and 623–648; these read IPAS…DTIW and LNLD…DEYE. The span at 416–428 shows a compositional bias: low complexity; it reads TSCSSETSHHSPS. In terms of domain architecture, N-terminal Ras-GEF spans 782–914; it reads SNNRIKGGSK…LLKEVNQKFK (133 aa). A Ras-GEF domain is found at 952–1199; that stretch reads DPVLFATQLT…YQLSLIIEPK (248 aa). Residues 1201 to 1252 form a disordered region; sequence RKKVVPNSNSNNKSQEKSRDDQTDEGKTSTKKDRFSKFQLHKTKKKAPKVSK. Residues 1214–1236 are compositionally biased toward basic and acidic residues; it reads SQEKSRDDQTDEGKTSTKKDRFS. Over residues 1239–1252 the composition is skewed to basic residues; that stretch reads QLHKTKKKAPKVSK.

Promotes the exchange of Ras-bound GDP by GTP. In Saccharomyces cerevisiae (strain RM11-1a) (Baker's yeast), this protein is Guanine nucleotide exchange factor SDC25 (SDC25).